We begin with the raw amino-acid sequence, 444 residues long: Probable glycine dehydrogenase (decarboxylating) subunit 1 (444 aa).

Belongs to the GcvP family. N-terminal subunit subfamily. In terms of assembly, the glycine cleavage system is composed of four proteins: P, T, L and H. In this organism, the P 'protein' is a heterodimer of two subunits.

It carries out the reaction N(6)-[(R)-lipoyl]-L-lysyl-[glycine-cleavage complex H protein] + glycine + H(+) = N(6)-[(R)-S(8)-aminomethyldihydrolipoyl]-L-lysyl-[glycine-cleavage complex H protein] + CO2. In terms of biological role, the glycine cleavage system catalyzes the degradation of glycine. The P protein binds the alpha-amino group of glycine through its pyridoxal phosphate cofactor; CO(2) is released and the remaining methylamine moiety is then transferred to the lipoamide cofactor of the H protein. The chain is Probable glycine dehydrogenase (decarboxylating) subunit 1 from Chlorobaculum parvum (strain DSM 263 / NCIMB 8327) (Chlorobium vibrioforme subsp. thiosulfatophilum).